We begin with the raw amino-acid sequence, 482 residues long: Zinc finger protein 223 (482 aa).

One can recognise a KRAB domain in the interval V8–S78. C2H2-type zinc fingers lie at residues H176–H198, F204–H226, F232–H254, Y260–H282, and F288–H310. The segment at N316–H338 adopts a C2H2-type 6; degenerate zinc-finger fold. 3 C2H2-type zinc fingers span residues Y344–H366, Y372–H394, and Y400–H422. The C2H2-type 10; degenerate zinc finger occupies F428–H450.

Belongs to the krueppel C2H2-type zinc-finger protein family.

It localises to the nucleus. Its function is as follows. May be involved in transcriptional regulation. This chain is Zinc finger protein 223 (ZNF223), found in Homo sapiens (Human).